The following is a 126-amino-acid chain: UPF0102 protein MXAN_3551 (126 aa).

It belongs to the UPF0102 family.

This Myxococcus xanthus (strain DK1622) protein is UPF0102 protein MXAN_3551.